A 74-amino-acid polypeptide reads, in one-letter code: Protein kish-B (74 aa).

Positions 1–22 (MTNVYSLDGILVFGLLFVCTCA) are cleaved as a signal peptide. The Extracellular portion of the chain corresponds to 23-52 (YFKKVPRLKTWLLSEKKGVWGVFYKAAVIG). A helical transmembrane segment spans residues 53–73 (TRLHAAVAIACVVMAFYVLFI). A topological domain (cytoplasmic) is located at residue Lys74.

This sequence belongs to the KISH family.

It is found in the golgi apparatus membrane. Involved in the early part of the secretory pathway. The protein is Protein kish-B (TMEM167B) of Homo sapiens (Human).